A 517-amino-acid chain; its full sequence is Cytochrome P450 CYP72A616 (517 aa).

A helical membrane pass occupies residues 5–25; it reads VLGALAALLAAAAAWVMRAAA. Cys-465 contacts heme.

It belongs to the cytochrome P450 family. As to expression, mainly expressed in leaves and, at low levels, in roots, fruits and stems.

The protein localises to the membrane. The protein operates within steroid metabolism; cholesterol metabolism. Involved in the biosynthesis of spiroketal steroid and saponin natural products from cholesterol such as diosgenin and analogs (e.g. furostanol and spirostanol), plant defense compounds used as main precursors for the industrial production of steroid hormones. During the 5,6-spiroketalization of cholesterol, may catalyze the 27-monohydroxylation of furostanol-type steroid to an intermediate product that undergoes a stereospecific formation of the terminal heterocycle to yield diosgenin. The sequence is that of Cytochrome P450 CYP72A616 from Paris polyphylla (Daiswa polyphylla).